We begin with the raw amino-acid sequence, 1097 residues long: Leukemia inhibitory factor receptor (1097 aa).

A signal peptide spans 1–44 (MMNISLRLRRPPWMVDSNGRRMTSHFQWLLLTFILLYLMNQVTS). The Extracellular segment spans residues 45 to 833 (EKRGAPRDLK…SMFVVTKENS (789 aa)). One can recognise a Fibronectin type-III 1 domain in the interval 46 to 131 (KRGAPRDLKC…ISKFTLNEKN (86 aa)). Cystine bridges form between cysteine 55–cysteine 65 and cysteine 82–cysteine 90. Asparagine 85, asparagine 131, asparagine 143, asparagine 191, asparagine 243, and asparagine 303 each carry an N-linked (GlcNAc...) asparagine glycan. The cysteines at positions 213 and 270 are disulfide-linked. Fibronectin type-III domains are found at residues 332 to 434 (PPDI…VYPR), 435 to 534 (IPTS…TEAI), 538 to 629 (GPDT…IPND), 627 to 719 (PNDD…IGYI), and 724 to 833 (PIVA…KENS). Cysteine 341 and cysteine 351 are joined by a disulfide. Residues asparagine 366, asparagine 390, asparagine 407, asparagine 426, asparagine 445, asparagine 471, asparagine 481, and asparagine 489 are each glycosylated (N-linked (GlcNAc...) asparagine). An intrachain disulfide couples cysteine 466 to cysteine 511. The WSXWS motif motif lies at 519 to 523 (WSKWS). 6 N-linked (GlcNAc...) asparagine glycosylation sites follow: asparagine 572, asparagine 652, asparagine 663, asparagine 680, asparagine 729, and asparagine 787. A helical membrane pass occupies residues 834–854 (VGLIIAILIPVAVAVIVGVVT). The Cytoplasmic portion of the chain corresponds to 855-1097 (SILCYRKREW…TNFFQNKPND (243 aa)). Residues 869–877 (FYPDIPNPE) carry the Box 1 motif motif. The residue at position 927 (serine 927) is a Phosphoserine. Disordered regions lie at residues 982-1005 (QPQA…KPQM) and 1022-1097 (LDKA…KPND). Composition is skewed to polar residues over residues 1032–1067 (ANVN…NSRQ) and 1086–1097 (SFTNFFQNKPND). At serine 1044 the chain carries Phosphoserine.

This sequence belongs to the type I cytokine receptor family. Type 2 subfamily. As to quaternary structure, heterodimer composed of LIFR and IL6ST. The heterodimer formed by LIFR and IL6ST interacts with the complex formed by CNTF and CNTFR.

The protein localises to the cell membrane. Functionally, signal-transducing molecule. May have a common pathway with IL6ST. The soluble form inhibits the biological activity of LIF by blocking its binding to receptors on target cells. The sequence is that of Leukemia inhibitory factor receptor (LIFR) from Canis lupus familiaris (Dog).